The chain runs to 327 residues: Putative HTH-type transcriptional regulatory protein Mevan_1514 (327 aa).

Residues 128–189 form the HTH cro/C1-type domain; sequence LKETREKLNI…IKGINITDYF (62 aa). Positions 139 to 158 form a DNA-binding region, H-T-H motif; sequence VGELAEFSRVSRKTIYKYEQ.

This is Putative HTH-type transcriptional regulatory protein Mevan_1514 from Methanococcus vannielii (strain ATCC 35089 / DSM 1224 / JCM 13029 / OCM 148 / SB).